The chain runs to 256 residues: 2,3,4,5-tetrahydropyridine-2,6-dicarboxylate N-acetyltransferase (256 aa).

The protein belongs to the transferase hexapeptide repeat family. DapH subfamily.

The catalysed reaction is (S)-2,3,4,5-tetrahydrodipicolinate + acetyl-CoA + H2O = L-2-acetamido-6-oxoheptanedioate + CoA. Its pathway is amino-acid biosynthesis; L-lysine biosynthesis via DAP pathway; LL-2,6-diaminopimelate from (S)-tetrahydrodipicolinate (acetylase route): step 1/3. In terms of biological role, catalyzes the transfer of an acetyl group from acetyl-CoA to tetrahydrodipicolinate. The chain is 2,3,4,5-tetrahydropyridine-2,6-dicarboxylate N-acetyltransferase from Lactococcus lactis subsp. cremoris (strain MG1363).